A 212-amino-acid polypeptide reads, in one-letter code: Methylthioribulose-1-phosphate dehydratase (212 aa).

2 residues coordinate Zn(2+): His97 and His99.

It belongs to the aldolase class II family. MtnB subfamily. Homotetramer. Zn(2+) is required as a cofactor.

The catalysed reaction is 5-(methylsulfanyl)-D-ribulose 1-phosphate = 5-methylsulfanyl-2,3-dioxopentyl phosphate + H2O. It participates in amino-acid biosynthesis; L-methionine biosynthesis via salvage pathway; L-methionine from S-methyl-5-thio-alpha-D-ribose 1-phosphate: step 2/6. In terms of biological role, catalyzes the dehydration of methylthioribulose-1-phosphate (MTRu-1-P) into 2,3-diketo-5-methylthiopentyl-1-phosphate (DK-MTP-1-P). The sequence is that of Methylthioribulose-1-phosphate dehydratase from Bacillus cytotoxicus (strain DSM 22905 / CIP 110041 / 391-98 / NVH 391-98).